Here is a 359-residue protein sequence, read N- to C-terminus: Patr class I histocompatibility antigen, B-1 alpha chain (359 aa).

Residues 1-20 form the signal peptide; the sequence is APRTVLLLLSAALALTETWA. The alpha-1 stretch occupies residues 21-110; the sequence is GSHSMRYFYT…ALRYYNQSEA (90 aa). Residues 21–305 are Extracellular-facing; sequence GSHSMRYFYT…PSSQSTIPIV (285 aa). N-linked (GlcNAc...) asparagine glycosylation is present at N106. An alpha-2 region spans residues 111–202; sequence GSHTWQTMYG…ENGKETLQRA (92 aa). Intrachain disulfides connect C121-C184 and C223-C279. Residues 203 to 294 are alpha-3; it reads DPPKTHVTHH…GLPKPLTLRW (92 aa). Residues 205 to 291 form the Ig-like C1-type domain; that stretch reads PKTHVTHHPI…QHEGLPKPLT (87 aa). Residues 295–305 form a connecting peptide region; it reads EPSSQSTIPIV. The chain crosses the membrane as a helical span at residues 306–329; sequence GIVAGLAVLVVTVAVVAVVAAVMC. The Cytoplasmic portion of the chain corresponds to 330–359; sequence RRKSSGGKGGSYSQAASSDSAQGSDVSLTA. Residues 332–359 form a disordered region; sequence KSSGGKGGSYSQAASSDSAQGSDVSLTA. A compositionally biased stretch (low complexity) spans 340 to 359; the sequence is SYSQAASSDSAQGSDVSLTA. 2 positions are modified to phosphoserine: S353 and S356.

The protein belongs to the MHC class I family. Heterodimer of an alpha chain and a beta chain (beta-2-microglobulin).

It is found in the membrane. Involved in the presentation of foreign antigens to the immune system. The polypeptide is Patr class I histocompatibility antigen, B-1 alpha chain (Pan troglodytes (Chimpanzee)).